A 206-amino-acid chain; its full sequence is Venom allergen 5 2 (206 aa).

4 cysteine pairs are disulfide-bonded: C4–C16, C8–C104, C28–C96, and C172–C189. Residues 48–191 (DEHNRFRQKV…MKSHYLVCNY (144 aa)) enclose the SCP domain.

This sequence belongs to the CRISP family. Venom allergen 5-like subfamily. In terms of tissue distribution, expressed by the venom gland.

The protein localises to the secreted. This Polybia paulista (Neotropical social wasp) protein is Venom allergen 5 2.